A 79-amino-acid chain; its full sequence is Raniseptin-3 (79 aa).

A signal peptide spans 1-22 (MAFLKKSLFLVLFLGIVSLSIC). Residues 23-49 (EEEKREGEEEEKQEEENEELSEEELRE) constitute a propeptide that is removed on maturation.

This sequence belongs to the frog skin active peptide (FSAP) family. Dermaseptin subfamily. As to expression, expressed by the skin glands.

Its subcellular location is the secreted. Functionally, has antibacterial activity. The chain is Raniseptin-3 from Boana raniceps (Chaco tree frog).